Consider the following 354-residue polypeptide: 3'-5' exonuclease (354 aa).

The disordered stretch occupies residues 1–120 (MERYLTKMPI…PSPEKEKPEK (120 aa)). Residues 13 to 50 (KANEVPKKEAFAKKETPKVARKATKTDTPKELKDKENA) show a composition bias toward basic and acidic residues. The segment covering 59–70 (TKGRPGRPAAKR) has biased composition (basic residues). The span at 71–91 (KNLDTPDVKDEKIAMEEENPP) shows a compositional bias: basic and acidic residues. Ser104, Ser110, and Ser112 each carry phosphoserine. A 3'-5' exonuclease domain is found at 149–314 (WVEKQKDDVV…GQVIYRELER (166 aa)). Positions 163, 165, and 301 each coordinate Mg(2+).

Belongs to the WRNexo family.

It is found in the nucleus. Its function is as follows. Has exonuclease activity on both single-stranded and duplex templates bearing overhangs, but not blunt ended duplex DNA, and cleaves in a 3'-5' direction. Essential for the formation of DNA replication focal centers. Has an important role in maintaining genome stability. This Drosophila sechellia (Fruit fly) protein is 3'-5' exonuclease.